The following is a 496-amino-acid chain: MTTEHIEELNDQQIIRREKMAALAEQGIDPFGKRFERTANSAQLKEKYNDKDKEELNELNETAIIAGRLMTKRGKGKVGFAHIQDREGQIQIYVRKDAVGEENYEIFKKADLGDFLGIEGEIMRTDMGELSIKATHLTHLSKALRPLPEKFHGLTDVETIYRKRYLDLISNRESFERFVTRSKIISEIRRYLDGQGFLEVETPVLHNEAGGAAARPFITHHNAQNIDMVLRIATELHLKRLIVGGMERVYEIGRIFRNEGMDATHNPEFTSIEVYQAYADFQDIMDLTEGIIQHAAVSVNGDGPVNYQGTEIKINEPFKRVHMVDAIKEITGVDFWQDMSFEEAAALAQEKKVPLEKHFTEVGHVINAFFEEFVEETLIQPTFVYGHPVAVSPLAKKNPEDPRFTDRFELFIMTKEYANAFTELNDPIDQLSRFEAQAKAKELGDDEATGIDYDFVEALEYGMPPTGGLGIGIDRLVMLLTDVTTIRDVLLFPTMK.

Mg(2+)-binding residues include Glu-409 and Glu-416.

It belongs to the class-II aminoacyl-tRNA synthetase family. Homodimer. Mg(2+) serves as cofactor.

It is found in the cytoplasm. It carries out the reaction tRNA(Lys) + L-lysine + ATP = L-lysyl-tRNA(Lys) + AMP + diphosphate. The polypeptide is Lysine--tRNA ligase (Streptococcus sanguinis (strain SK36)).